Consider the following 587-residue polypeptide: Phosphatidate phosphatase APP1 (587 aa).

2 disordered regions span residues 1–28 (MNSQ…RMGK) and 150–178 (PPHL…SENR). Composition is skewed to low complexity over residues 9 to 22 (SSSS…PTSG) and 163 to 174 (SQSSIESSLSSK). Positions 281 to 285 (DIDDT) match the DXDXT motif motif. A disordered region spans residues 452–521 (QQRPMQMTKS…NRQLPNLDAN (70 aa)). Residues 467-483 (RRPPPPPIPSTQKPSLT) form an interaction with SH3 domain of ABP1 region.

Monomer. Interacts with ABP1. Mg(2+) serves as cofactor. In terms of processing, N-glycosylated.

It is found in the cytoplasm. The protein resides in the cytoskeleton. Its subcellular location is the actin patch. It carries out the reaction a 1,2-diacyl-sn-glycero-3-phosphate + H2O = a 1,2-diacyl-sn-glycerol + phosphate. The enzyme catalyses 1,2-di-(9Z-octadecenoyl)-sn-glycero-3-phosphate + H2O = 1,2-di-(9Z-octadecenoyl)-sn-glycerol + phosphate. Inhibited by N-ethylmaleimide. Its function is as follows. Mg(2+)-dependent phosphatidate (PA) phosphatase which catalyzes the dephosphorylation of PA to yield diacylglycerol. May play a role in vesicular trafficking through its PAP activity at cortical actin patches. Can also utilize diacylglycerol pyrophosphate and lyso-PA as substrates with specificity constants 4- and 7-fold lower, respectively, when compared with PA. In Saccharomyces cerevisiae (strain ATCC 204508 / S288c) (Baker's yeast), this protein is Phosphatidate phosphatase APP1 (APP1).